The sequence spans 92 residues: Small ribosomal subunit protein uS19 (92 aa).

Belongs to the universal ribosomal protein uS19 family.

Its function is as follows. Protein S19 forms a complex with S13 that binds strongly to the 16S ribosomal RNA. In Corynebacterium aurimucosum (strain ATCC 700975 / DSM 44827 / CIP 107346 / CN-1) (Corynebacterium nigricans), this protein is Small ribosomal subunit protein uS19.